The chain runs to 289 residues: G1/S-specific cyclin-D2 (289 aa).

The region spanning 26 to 151 (LQNLLTIEER…VLGKLKWNLA (126 aa)) is the Cyclin N-terminal domain. Residues 264–289 (QHNAGSKSVEDPDQATTPTDVRDVDL) are disordered. S271 bears the Phosphoserine mark. T280 carries the post-translational modification Phosphothreonine.

It belongs to the cyclin family. Cyclin D subfamily. As to quaternary structure, interacts with either CDK4 or CDK6 protein kinase to form a serine/threonine kinase holoenzyme complex. The cyclin subunit imparts substrate specificity to the complex. Post-translationally, phosphorylation at Thr-280 by MAP kinases is required for ubiquitination and degradation by the DCX(AMBRA1) complex. In terms of processing, ubiquitinated by the DCX(AMBRA1) complex during the transition from G1 to S cell phase, leading to its degradation: ubiquitination is dependent on Thr-280 phosphorylation. The DCX(AMBRA1) complex represents the major regulator of CCND2 stability during the G1/S transition. Polyubiquitinated by the SCF(FBXL2) complex, leading to proteasomal degradation.

The protein resides in the nucleus. The protein localises to the cytoplasm. It localises to the nucleus membrane. Its function is as follows. Regulatory component of the cyclin D2-CDK4 (DC) complex that phosphorylates and inhibits members of the retinoblastoma (RB) protein family including RB1 and regulates the cell-cycle during G(1)/S transition. Phosphorylation of RB1 allows dissociation of the transcription factor E2F from the RB/E2F complex and the subsequent transcription of E2F target genes which are responsible for the progression through the G(1) phase. Hypophosphorylates RB1 in early G(1) phase. Cyclin D-CDK4 complexes are major integrators of various mitogenenic and antimitogenic signals. The chain is G1/S-specific cyclin-D2 from Mus musculus (Mouse).